We begin with the raw amino-acid sequence, 210 residues long: Probable septum site-determining protein MinC (210 aa).

It belongs to the MinC family. In terms of assembly, interacts with MinD and FtsZ.

Functionally, cell division inhibitor that blocks the formation of polar Z ring septums. Rapidly oscillates between the poles of the cell to destabilize FtsZ filaments that have formed before they mature into polar Z rings. Prevents FtsZ polymerization. In Thermotoga sp. (strain RQ2), this protein is Probable septum site-determining protein MinC.